Here is a 519-residue protein sequence, read N- to C-terminus: Putative cytochrome P450 CYP13A10 (519 aa).

A helical transmembrane segment spans residues 3 to 23; sequence VILLAIPTLFIGFISYYLWIW. Residue Cys465 participates in heme binding.

It belongs to the cytochrome P450 family. Requires heme as cofactor.

It localises to the membrane. Its function is as follows. Cytochromes P450 are a group of heme-thiolate monooxygenases. They oxidize a variety of structurally unrelated compounds, including steroids, fatty acids, and xenobiotics. The protein is Putative cytochrome P450 CYP13A10 (cyp-13A10) of Caenorhabditis elegans.